A 186-amino-acid chain; its full sequence is Large ribosomal subunit protein uL5c (186 aa).

It belongs to the universal ribosomal protein uL5 family. Part of the 50S ribosomal subunit; contacts the 5S rRNA.

It localises to the plastid. It is found in the chloroplast. Its function is as follows. Binds 5S rRNA, forms part of the central protuberance of the 50S subunit. In Pleurastrum terricola (Filamentous green alga), this protein is Large ribosomal subunit protein uL5c (rpl5).